We begin with the raw amino-acid sequence, 254 residues long: Glutamate racemase (254 aa).

Substrate is bound by residues 10-11 and 42-43; these read DS and YG. Cys73 acts as the Proton donor/acceptor in catalysis. 74 to 75 provides a ligand contact to substrate; sequence NT. Residue Cys183 is the Proton donor/acceptor of the active site. Residue 184–185 participates in substrate binding; the sequence is TH.

It belongs to the aspartate/glutamate racemases family.

The enzyme catalyses L-glutamate = D-glutamate. It functions in the pathway cell wall biogenesis; peptidoglycan biosynthesis. Its function is as follows. Provides the (R)-glutamate required for cell wall biosynthesis. This Herpetosiphon aurantiacus (strain ATCC 23779 / DSM 785 / 114-95) protein is Glutamate racemase.